The sequence spans 184 residues: ATP synthase subunit delta (184 aa).

This sequence belongs to the ATPase delta chain family. In terms of assembly, F-type ATPases have 2 components, F(1) - the catalytic core - and F(0) - the membrane proton channel. F(1) has five subunits: alpha(3), beta(3), gamma(1), delta(1), epsilon(1). F(0) has three main subunits: a(1), b(2) and c(10-14). The alpha and beta chains form an alternating ring which encloses part of the gamma chain. F(1) is attached to F(0) by a central stalk formed by the gamma and epsilon chains, while a peripheral stalk is formed by the delta and b chains.

The protein resides in the cell membrane. Functionally, f(1)F(0) ATP synthase produces ATP from ADP in the presence of a proton or sodium gradient. F-type ATPases consist of two structural domains, F(1) containing the extramembraneous catalytic core and F(0) containing the membrane proton channel, linked together by a central stalk and a peripheral stalk. During catalysis, ATP synthesis in the catalytic domain of F(1) is coupled via a rotary mechanism of the central stalk subunits to proton translocation. In terms of biological role, this protein is part of the stalk that links CF(0) to CF(1). It either transmits conformational changes from CF(0) to CF(1) or is implicated in proton conduction. The sequence is that of ATP synthase subunit delta from Wolbachia pipientis subsp. Culex pipiens (strain wPip).